The sequence spans 183 residues: Deoxyuridine 5'-triphosphate nucleotidohydrolase (183 aa).

Residues 67–69 (RSG), Asn80, 84–86 (TID), and Lys94 contribute to the substrate site. Positions 138–183 (RAEGGFGSTGGHAGLDPASGTSGQVAEGGPTGGNRYASVVSDREGQ) are disordered. Gly residues predominate over residues 141 to 150 (GGFGSTGGHA).

The protein belongs to the dUTPase family. Mg(2+) serves as cofactor.

It catalyses the reaction dUTP + H2O = dUMP + diphosphate + H(+). Its pathway is pyrimidine metabolism; dUMP biosynthesis; dUMP from dCTP (dUTP route): step 2/2. Functionally, this enzyme is involved in nucleotide metabolism: it produces dUMP, the immediate precursor of thymidine nucleotides and it decreases the intracellular concentration of dUTP so that uracil cannot be incorporated into DNA. This is Deoxyuridine 5'-triphosphate nucleotidohydrolase from Streptomyces coelicolor (strain ATCC BAA-471 / A3(2) / M145).